We begin with the raw amino-acid sequence, 235 residues long: Nucleoside diphosphate kinase 4, chloroplastic (235 aa).

ATP contacts are provided by lysine 93, phenylalanine 141, arginine 169, threonine 175, arginine 186, and asparagine 196. Histidine 199 acts as the Pros-phosphohistidine intermediate in catalysis.

It belongs to the NDK family. As to quaternary structure, homohexamer. Requires Mg(2+) as cofactor.

The protein localises to the plastid. It is found in the chloroplast thylakoid lumen. It carries out the reaction a 2'-deoxyribonucleoside 5'-diphosphate + ATP = a 2'-deoxyribonucleoside 5'-triphosphate + ADP. The enzyme catalyses a ribonucleoside 5'-diphosphate + ATP = a ribonucleoside 5'-triphosphate + ADP. Functionally, major role in the synthesis of nucleoside triphosphates other than ATP. The ATP gamma phosphate is transferred to the NDP beta phosphate via a ping-pong mechanism, using a phosphorylated active-site intermediate. Shows the highest specificity towards GDP. This is Nucleoside diphosphate kinase 4, chloroplastic (NDK4) from Spinacia oleracea (Spinach).